The primary structure comprises 763 residues: MSELLSFALFLASVLIYAWKAGRNTWWFAATLTVLGLFVVLNITLFASDYFTGDGINDAVLYTLTNSLTGAGVSKYILPGIGIVLGLAAVFGALGWILRRRRHHPHHFGYSLLALLLALGSVDASPAFRQITELVKSQSRDGDPDFAAYYKEPSRTIPDPKLNLVYIYGESLERTYFDNEAFPDLTPELGALKNEGLDFSHTQQLPGTDYTIAGMVASQCGIPLFAPFEGNASASVSSFFPQNICLGDILKNSGYQNYFVQGANLRFAGKDVFLKSHGFDHLYGSEELKSVVADPHYRNDWGFYDDTVLDEAWKKFEELSRSGQRFSLFTLTVDTHHPDGFISRTCNRKKYDFDGKPNQSFSAVSCSQENIATFINKIKASPWFKDTVIVVSSDHLAMNNTAWKYLNKQDRNNLFFVIRGDKPQQETLAVKRNTMDNGATVLDILGGDNYLGLGRSSLSGQSMSEIFLNIKEKTLAWKPDIIRLWKFPKEMKEFTIDQQKNMIAFSGSHFRLPLLLRVSDKRVEPLPESEYSAPLRFQLADFAPRDNFVWVDRCYKMAQLWAPELALSTDWCVSQGQLGGQQIVQHVDKAIWKGKTAFKDTVIDMARYKGNVDTLKIVDNDIRYKADSFIFNVAGAPEEVKQFSGISRPESWGRWSNAQLGDEVKIEYKHPLPKKFDLVITAKAYGNNASRPIPVRVGNEEQTLVLGNEVTTTTLHFDNPTDADTLVIVPPEPVSTNEGNILGHSPRKLGIGMVEIKVVEREG.

Helical transmembrane passes span Met-1–Ala-21, Trp-26–Phe-46, Ile-77–Ile-97, and Phe-108–Phe-128.

It belongs to the OpgB family.

Its subcellular location is the cell inner membrane. The enzyme catalyses a phosphatidylglycerol + a membrane-derived-oligosaccharide D-glucose = a 1,2-diacyl-sn-glycerol + a membrane-derived-oligosaccharide 6-(glycerophospho)-D-glucose.. The protein operates within glycan metabolism; osmoregulated periplasmic glucan (OPG) biosynthesis. Its function is as follows. Transfers a phosphoglycerol residue from phosphatidylglycerol to the membrane-bound nascent glucan backbones. This is Phosphoglycerol transferase I from Escherichia coli O7:K1 (strain IAI39 / ExPEC).